The chain runs to 592 residues: Coronatine-insensitive protein 1 (592 aa).

One can recognise an F-box domain in the interval T16–M57. LRR repeat units lie at residues A58–G82, K83–P102, W103–R120, R121–D154, G155–K182, W183–K210, D211–V236, G237–M264, N265–N283, E284–E308, D309–R332, G333–R368, G369–E393, S394–N426, G427–S456, Y457–E478, G479–F500, and S501–R524. R85 is a jasmonate binding site. Residues R348, Y386, and R409 each contribute to the jasmonate site. R496 lines the jasmonate pocket.

In terms of assembly, component of SCF(COI1) E3 ubiquitin ligase complexes at least composed of ASK1 or ASK2, CUL1, RBX1A or RBX1B and COI1. Interacts with ASK1 and ASK2, but separately. Also binds to ASK11 and ASK12. Interacts with RBCS-1B and HDA6. SCF complexes interact with the COP9 signalosome (CSN). Interacts with TIFY10A.

Its pathway is protein modification; protein ubiquitination. In terms of biological role, required for jasmonate-regulated plant fertility and defense processes, and for coronatine and/or other elicitors perceptions/responses. Seems to not be required for meiosis. Required for the regulation of some genes induced by wounding, but not for all. Component of SCF(COI1) E3 ubiquitin ligase complexes, which may mediate the ubiquitination and subsequent proteasomal degradation of target proteins (probably including the ribulose bisphosphate carboxylase small chain 1B RBCS-1B and the histone deacetylase HDA6). These SCF complexes play crucial roles in regulating response to jasmonate, and their interactions with the COP9 signalosome (CSN) appear to be important for their activity. Interacts with TIFY10A and inositol pentakisphosphate to form a high-affinity jasmonates coreceptor. Involved in the regulation of plant gene expression during plant-pathogen interactions with Pseudomonas syringae and Alternaria brassicicola. The protein is Coronatine-insensitive protein 1 (COI1) of Arabidopsis thaliana (Mouse-ear cress).